Consider the following 181-residue polypeptide: MTDRTDADDLDLQRVGARLAARAQIRDIRLLRTQAAVHRAPKPAQGLTYDLEFEPAVDADPATISAFVVRISCHLRIQNQAADDDVKEGDTKDETQDVATADFEFAALFDYHLQEGEDDPTEEELTAYAATTGRFALYPYIREYVYDLTGRLALPPLTLEILSRPMPVSPGAQWPATRGTP.

Position 2 is an N-acetylthreonine (Thr-2).

This sequence belongs to the SecB-like family. In terms of assembly, homotetramer, interacts with antitoxin HigA1.

In terms of biological role, chaperone component of an atypical, type II toxin-antitoxin chaperone (TAC) system. Prevents antitoxin HigA1 aggregation in vitro at a 1:3 chaperone:antitoxin ratio, probably also protects antitoxin HigA1 from protease. Required for neutralization of toxin HigB1 upon ectopic expression in Mycobacterium marinum or E.coli. When expressed in E.coli complements a secB deletion, restores export of OmpA and MBP and inhibits aggregation of proOmpC although it is less efficient than endogenous SecB. Complements the general chaperone function of E.coli SecB less well. This Mycobacterium tuberculosis (strain ATCC 25618 / H37Rv) protein is SecB-like chaperone Rv1957 (secBL).